The following is an 84-amino-acid chain: MAHKKAGGSTRNGRDSESKRLGVKRFGGESVLAGNIIVRQRGTKFHAGVNVGIGRDHTLFALSDGKVKFEVKGPNNRKFISIEA.

A disordered region spans residues 1-22; sequence MAHKKAGGSTRNGRDSESKRLG.

The protein belongs to the bacterial ribosomal protein bL27 family.

The sequence is that of Large ribosomal subunit protein bL27 from Shewanella denitrificans (strain OS217 / ATCC BAA-1090 / DSM 15013).